A 299-amino-acid polypeptide reads, in one-letter code: MDNIIDGKKLAENVIAKVKNETEKLKNSHNIQPGIAVIIVGDDPASQVYVASKSKKAEECGFFSMKHVLPKEVEESELLQLIEILNSDPKIHGILVQLPLPAHINTDRATQAIAVEKDVDGFHYINIGKLAANAIKDAIIPCTPAGAMMMIEQQCGQDLSGLNAVIVGRSNIVGKPMAALLTAANATVTLAHSRTRDLDEICRRADILIAAVGRPQMIKKHWVKKGAIVIDVGINRIAAPEKGPGKTRLVGDVDFEEVKGKTLAITPVPGGVGPMTIAMLMVNTLKAAARSLKLPVPKF.

NADP(+) is bound by residues 168 to 170 (GRS), Ser193, and Ile234.

It belongs to the tetrahydrofolate dehydrogenase/cyclohydrolase family. In terms of assembly, homodimer.

The catalysed reaction is (6R)-5,10-methylene-5,6,7,8-tetrahydrofolate + NADP(+) = (6R)-5,10-methenyltetrahydrofolate + NADPH. The enzyme catalyses (6R)-5,10-methenyltetrahydrofolate + H2O = (6R)-10-formyltetrahydrofolate + H(+). It participates in one-carbon metabolism; tetrahydrofolate interconversion. Its function is as follows. Catalyzes the oxidation of 5,10-methylenetetrahydrofolate to 5,10-methenyltetrahydrofolate and then the hydrolysis of 5,10-methenyltetrahydrofolate to 10-formyltetrahydrofolate. In Bartonella bacilliformis (strain ATCC 35685 / KC583 / Herrer 020/F12,63), this protein is Bifunctional protein FolD.